A 359-amino-acid polypeptide reads, in one-letter code: 3-isopropylmalate dehydrogenase (359 aa).

76 to 89 provides a ligand contact to NAD(+); it reads GPKWDTIERSIRPE. Residues R96, R106, R134, and D225 each contribute to the substrate site. Residues D225, D249, and D253 each coordinate Mg(2+). 283–295 serves as a coordination point for NAD(+); the sequence is GSAPDIAGQNVAN.

Belongs to the isocitrate and isopropylmalate dehydrogenases family. LeuB type 1 subfamily. Homodimer. Requires Mg(2+) as cofactor. Mn(2+) is required as a cofactor.

It localises to the cytoplasm. The catalysed reaction is (2R,3S)-3-isopropylmalate + NAD(+) = 4-methyl-2-oxopentanoate + CO2 + NADH. Its pathway is amino-acid biosynthesis; L-leucine biosynthesis; L-leucine from 3-methyl-2-oxobutanoate: step 3/4. In terms of biological role, catalyzes the oxidation of 3-carboxy-2-hydroxy-4-methylpentanoate (3-isopropylmalate) to 3-carboxy-4-methyl-2-oxopentanoate. The product decarboxylates to 4-methyl-2 oxopentanoate. This chain is 3-isopropylmalate dehydrogenase, found in Acinetobacter baylyi (strain ATCC 33305 / BD413 / ADP1).